A 220-amino-acid polypeptide reads, in one-letter code: Adapter protein MecA (220 aa).

This sequence belongs to the MecA family. As to quaternary structure, homodimer.

In terms of biological role, enables the recognition and targeting of unfolded and aggregated proteins to the ClpC protease or to other proteins involved in proteolysis. The protein is Adapter protein MecA of Macrococcus caseolyticus (strain JCSC5402) (Macrococcoides caseolyticum).